Consider the following 201-residue polypeptide: Large ribosomal subunit protein uL4 (201 aa).

Residues Thr-43–Arg-69 form a disordered region.

Belongs to the universal ribosomal protein uL4 family. As to quaternary structure, part of the 50S ribosomal subunit.

Functionally, one of the primary rRNA binding proteins, this protein initially binds near the 5'-end of the 23S rRNA. It is important during the early stages of 50S assembly. It makes multiple contacts with different domains of the 23S rRNA in the assembled 50S subunit and ribosome. Its function is as follows. Forms part of the polypeptide exit tunnel. This Thioalkalivibrio sulfidiphilus (strain HL-EbGR7) protein is Large ribosomal subunit protein uL4.